Here is a 252-residue protein sequence, read N- to C-terminus: Triosephosphate isomerase (252 aa).

A substrate-binding site is contributed by 11-13 (NWK). His-97 (electrophile) is an active-site residue. The active-site Proton acceptor is the Glu-169. Substrate is bound by residues Gly-175, Ser-215, and 236–237 (GG).

It belongs to the triosephosphate isomerase family. Homodimer.

It localises to the cytoplasm. It carries out the reaction D-glyceraldehyde 3-phosphate = dihydroxyacetone phosphate. The protein operates within carbohydrate biosynthesis; gluconeogenesis. Its pathway is carbohydrate degradation; glycolysis; D-glyceraldehyde 3-phosphate from glycerone phosphate: step 1/1. Its function is as follows. Involved in the gluconeogenesis. Catalyzes stereospecifically the conversion of dihydroxyacetone phosphate (DHAP) to D-glyceraldehyde-3-phosphate (G3P). This Mycoplasmoides gallisepticum (strain R(low / passage 15 / clone 2)) (Mycoplasma gallisepticum) protein is Triosephosphate isomerase.